A 285-amino-acid polypeptide reads, in one-letter code: uncharacterized protein (285 aa).

The protein belongs to the methyltransferase superfamily.

This is an uncharacterized protein from Mycobacterium tuberculosis (strain CDC 1551 / Oshkosh).